The sequence spans 382 residues: MRSPLCWLLPLLILASVAQGQPTRRPRPGTGPGRRPRPRPRPTPSFPQPDEPAEPTDLPPPLPPGPPSIFPDCPRECYCPPDFPSALYCDSRNLRKVPVIPPRIHYLYLQNNFITELPVESFQNATGLRWINLDNNRIRKIDQRVLEKLPGLVFLYMEKNQLEEVPSALPRNLEQLRLSQNHISRIPPGVFSKLENLLLLDLQHNRLSDGVFKPDTFHGLKNLMQLNLAHNILRKMPPRVPTAIHQLYLDSNKIETIPNGYFKSFPNLAFIRLNYNKLTDRGLPKNSFNISNLLVLHLSHNRISSVPAINNRLEHLYLNNNSIEKINGTQICPNDLVAFHDFSSDLENVPHLRYLRLDGNYLKPPIPLDLMMCFRLLQSVVI.

A signal peptide spans Met1–Gly20. The disordered stretch occupies residues Gln19–Pro66. Pro residues-rich tracts occupy residues Arg41 to Asp50 and Asp57 to Pro66. LRR repeat units follow at residues Arg95–Ile114, Thr115–Ile138, Arg139–Leu162, Glu163–Ile183, Ser184–Leu207, Ser208–Leu233, Arg234–Ile254, Glu255–Leu278, Thr279–Ile303, Ser304–Ile323, Glu324–Leu362, and Lys363–Ile382. Asn124 carries an N-linked (GlcNAc...) asparagine glycan. 3 N-linked (GlcNAc...) asparagine glycosylation sites follow: Asn289, Asn320, and Asn327. Cys332 and Cys373 are disulfide-bonded.

Belongs to the small leucine-rich proteoglycan (SLRP) family. SLRP class II subfamily. In terms of assembly, binds the basement membrane heparan sulfate proteoglycan perlecan and triple helical collagens type I and type II. In terms of processing, glycosylated; contains heparan sulfate. Connective tissue.

The protein localises to the secreted. It is found in the extracellular space. It localises to the extracellular matrix. In terms of biological role, may anchor basement membranes to the underlying connective tissue. The sequence is that of Prolargin (PRELP) from Homo sapiens (Human).